The sequence spans 465 residues: ATP synthase subunit beta (465 aa).

152 to 159 (GGAGVGKT) is an ATP binding site.

The protein belongs to the ATPase alpha/beta chains family. In terms of assembly, F-type ATPases have 2 components, CF(1) - the catalytic core - and CF(0) - the membrane proton channel. CF(1) has five subunits: alpha(3), beta(3), gamma(1), delta(1), epsilon(1). CF(0) has three main subunits: a(1), b(2) and c(9-12). The alpha and beta chains form an alternating ring which encloses part of the gamma chain. CF(1) is attached to CF(0) by a central stalk formed by the gamma and epsilon chains, while a peripheral stalk is formed by the delta and b chains.

Its subcellular location is the cell membrane. The catalysed reaction is ATP + H2O + 4 H(+)(in) = ADP + phosphate + 5 H(+)(out). Produces ATP from ADP in the presence of a proton gradient across the membrane. The catalytic sites are hosted primarily by the beta subunits. This chain is ATP synthase subunit beta, found in Ruminiclostridium cellulolyticum (strain ATCC 35319 / DSM 5812 / JCM 6584 / H10) (Clostridium cellulolyticum).